A 227-amino-acid polypeptide reads, in one-letter code: Cytochrome c oxidase subunit 2 (227 aa).

Topologically, residues 1-14 (MAYPFQLGLQDATS) are mitochondrial intermembrane. The chain crosses the membrane as a helical span at residues 15 to 45 (PIMEELTNFHDHTLMIVFLISSLVLYIISLM). Residues 46-59 (LTTKLTHTSTMDAQ) are Mitochondrial matrix-facing. The helical transmembrane segment at 60–87 (EVETIWTILPAVILILIALPSLRILYMM) threads the bilayer. The Mitochondrial intermembrane segment spans residues 88–227 (DEINNPVLTV…HFENWSTSMI (140 aa)). 6 residues coordinate Cu cation: His-161, Cys-196, Glu-198, Cys-200, His-204, and Met-207. Mg(2+) is bound at residue Glu-198.

It belongs to the cytochrome c oxidase subunit 2 family. Component of the cytochrome c oxidase (complex IV, CIV), a multisubunit enzyme composed of 14 subunits. The complex is composed of a catalytic core of 3 subunits MT-CO1, MT-CO2 and MT-CO3, encoded in the mitochondrial DNA, and 11 supernumerary subunits COX4I, COX5A, COX5B, COX6A, COX6B, COX6C, COX7A, COX7B, COX7C, COX8 and NDUFA4, which are encoded in the nuclear genome. The complex exists as a monomer or a dimer and forms supercomplexes (SCs) in the inner mitochondrial membrane with NADH-ubiquinone oxidoreductase (complex I, CI) and ubiquinol-cytochrome c oxidoreductase (cytochrome b-c1 complex, complex III, CIII), resulting in different assemblies (supercomplex SCI(1)III(2)IV(1) and megacomplex MCI(2)III(2)IV(2)). Found in a complex with TMEM177, COA6, COX18, COX20, SCO1 and SCO2. Interacts with TMEM177 in a COX20-dependent manner. Interacts with COX20. Interacts with COX16. Cu cation serves as cofactor.

The protein localises to the mitochondrion inner membrane. It carries out the reaction 4 Fe(II)-[cytochrome c] + O2 + 8 H(+)(in) = 4 Fe(III)-[cytochrome c] + 2 H2O + 4 H(+)(out). Its function is as follows. Component of the cytochrome c oxidase, the last enzyme in the mitochondrial electron transport chain which drives oxidative phosphorylation. The respiratory chain contains 3 multisubunit complexes succinate dehydrogenase (complex II, CII), ubiquinol-cytochrome c oxidoreductase (cytochrome b-c1 complex, complex III, CIII) and cytochrome c oxidase (complex IV, CIV), that cooperate to transfer electrons derived from NADH and succinate to molecular oxygen, creating an electrochemical gradient over the inner membrane that drives transmembrane transport and the ATP synthase. Cytochrome c oxidase is the component of the respiratory chain that catalyzes the reduction of oxygen to water. Electrons originating from reduced cytochrome c in the intermembrane space (IMS) are transferred via the dinuclear copper A center (CU(A)) of subunit 2 and heme A of subunit 1 to the active site in subunit 1, a binuclear center (BNC) formed by heme A3 and copper B (CU(B)). The BNC reduces molecular oxygen to 2 water molecules using 4 electrons from cytochrome c in the IMS and 4 protons from the mitochondrial matrix. In Praomys taitae (Taita hill rat), this protein is Cytochrome c oxidase subunit 2 (MT-CO2).